The sequence spans 311 residues: Methionyl-tRNA formyltransferase (311 aa).

112 to 115 (SLLP) contacts (6S)-5,6,7,8-tetrahydrofolate.

The protein belongs to the Fmt family.

The enzyme catalyses L-methionyl-tRNA(fMet) + (6R)-10-formyltetrahydrofolate = N-formyl-L-methionyl-tRNA(fMet) + (6S)-5,6,7,8-tetrahydrofolate + H(+). In terms of biological role, attaches a formyl group to the free amino group of methionyl-tRNA(fMet). The formyl group appears to play a dual role in the initiator identity of N-formylmethionyl-tRNA by promoting its recognition by IF2 and preventing the misappropriation of this tRNA by the elongation apparatus. This chain is Methionyl-tRNA formyltransferase, found in Sinorhizobium medicae (strain WSM419) (Ensifer medicae).